The chain runs to 394 residues: 4-O-methyl-glucuronoyl methylesterase (394 aa).

The N-terminal stretch at 1 to 18 is a signal peptide; the sequence is MVHLTPALLLASAAFAAA. 3 disulfide bridges follow: cysteine 29/cysteine 63, cysteine 210/cysteine 345, and cysteine 242/cysteine 317. A GXSYXG catalytic site motif motif is present at residues 209 to 214; that stretch reads GCSRNG. Residue serine 211 is the Nucleophile of the active site. Lysine 215, glutamine 257, glutamate 265, and tryptophan 308 together coordinate substrate. Catalysis depends on histidine 344, which acts as the Proton donor/acceptor.

Belongs to the carbohydrate esterase 15 (CE15) family.

Its subcellular location is the secreted. The enzyme catalyses a 4-O-methyl-alpha-D-glucuronosyl ester derivative + H2O = 4-O-methyl-alpha-D-glucuronate derivative + an alcohol + H(+). Glucuronoyl esterase which may play a significant role in biomass degradation, as it is considered to disconnect hemicellulose from lignin through the hydrolysis of the ester bond between 4-O-methyl-D-glucuronic acid residues of glucuronoxylans and aromatic alcohols of lignin. This chain is 4-O-methyl-glucuronoyl methylesterase, found in Neurospora crassa (strain ATCC 24698 / 74-OR23-1A / CBS 708.71 / DSM 1257 / FGSC 987).